The chain runs to 144 residues: HMG1/2-like protein (144 aa).

Disordered regions lie at residues 1–42 and 85–144; these read MKGG…PPSA and PFIS…EDDD. Composition is skewed to basic and acidic residues over residues 8–35 and 89–99; these read AKSDNKLAVKKQAADTKKTKKAVKDPNK and KAEKRKQEYEK. The segment at residues 36–105 is a DNA-binding region (HMG box); it reads PKRPPSAFFV…EYEKNLQAYN (70 aa). A compositionally biased stretch (acidic residues) spans 126–144; that stretch reads NDDDEDQDGSGEDDSEDDD.

The protein belongs to the HMGB family. As to expression, expressed at higher levels in dark-grown tissues, such as roots; and at lower levels in light-grown tissues, such as cotyledons and stems.

The protein localises to the nucleus. The polypeptide is HMG1/2-like protein (Ipomoea nil (Japanese morning glory)).